Consider the following 967-residue polypeptide: Isoleucine--tRNA ligase (967 aa).

The short motif at 68–78 (PYANGTLHMGH) is the 'HIGH' region element. Glu583 contributes to the L-isoleucyl-5'-AMP binding site. A 'KMSKS' region motif is present at residues 624–628 (KMSKS). ATP is bound at residue Lys627. Zn(2+)-binding residues include Cys937, Cys940, Cys957, and Cys960.

The protein belongs to the class-I aminoacyl-tRNA synthetase family. IleS type 1 subfamily. As to quaternary structure, monomer. Zn(2+) serves as cofactor.

The protein localises to the cytoplasm. It carries out the reaction tRNA(Ile) + L-isoleucine + ATP = L-isoleucyl-tRNA(Ile) + AMP + diphosphate. In terms of biological role, catalyzes the attachment of isoleucine to tRNA(Ile). As IleRS can inadvertently accommodate and process structurally similar amino acids such as valine, to avoid such errors it has two additional distinct tRNA(Ile)-dependent editing activities. One activity is designated as 'pretransfer' editing and involves the hydrolysis of activated Val-AMP. The other activity is designated 'posttransfer' editing and involves deacylation of mischarged Val-tRNA(Ile). The sequence is that of Isoleucine--tRNA ligase from Prochlorococcus marinus (strain NATL1A).